The sequence spans 922 residues: Alpha-actinin, sarcomeric (922 aa).

An actin-binding region spans residues Met-1–His-252. 2 consecutive Calponin-homology (CH) domains span residues Lys-36–Ala-140 and Met-149–Gln-255. Spectrin repeat units lie at residues Ala-253–Asp-393, Ile-394–Arg-508, Ile-509–Leu-629, and Ile-630–Thr-742. EF-hand domains are found at residues Glu-776–Ser-811 and Gln-817–Asp-852. Residues Asp-789, Asn-791, Thr-793, Arg-795, and Glu-800 each contribute to the Ca(2+) site.

It belongs to the alpha-actinin family. As to quaternary structure, homodimer; antiparallel.

F-actin cross-linking protein which is thought to anchor actin to a variety of intracellular structures. This is a bundling protein. In Anopheles gambiae (African malaria mosquito), this protein is Alpha-actinin, sarcomeric (Actn).